A 611-amino-acid chain; its full sequence is Aspartate--tRNA(Asp/Asn) ligase (611 aa).

Glu-174 contributes to the L-aspartate binding site. Positions 198–201 (QLFK) are aspartate. L-aspartate is bound at residue Arg-220. ATP is bound by residues 220–222 (RDE) and Gln-229. His-467 contributes to the L-aspartate binding site. ATP is bound at residue Glu-501. L-aspartate is bound at residue Arg-508. Residue 553–556 (GLDR) participates in ATP binding.

Belongs to the class-II aminoacyl-tRNA synthetase family. Type 1 subfamily. Homodimer.

It is found in the cytoplasm. It carries out the reaction tRNA(Asx) + L-aspartate + ATP = L-aspartyl-tRNA(Asx) + AMP + diphosphate. Aspartyl-tRNA synthetase with relaxed tRNA specificity since it is able to aspartylate not only its cognate tRNA(Asp) but also tRNA(Asn). Reaction proceeds in two steps: L-aspartate is first activated by ATP to form Asp-AMP and then transferred to the acceptor end of tRNA(Asp/Asn). The protein is Aspartate--tRNA(Asp/Asn) ligase of Albidiferax ferrireducens (strain ATCC BAA-621 / DSM 15236 / T118) (Rhodoferax ferrireducens).